Reading from the N-terminus, the 429-residue chain is Adenylosuccinate synthetase (429 aa).

Residues 12–18 (GDEGKGK) and 40–42 (GHT) contribute to the GTP site. Residue Asp13 is the Proton acceptor of the active site. Mg(2+)-binding residues include Asp13 and Gly40. IMP is bound by residues 13 to 16 (DEGK), 38 to 41 (NAGH), Thr129, Arg143, Gln223, Thr238, and Arg302. Residue His41 is the Proton donor of the active site. Position 298-304 (298-304 (VVTGRKR)) interacts with substrate. GTP is bound by residues Arg304, 330 to 332 (KLD), and 412 to 414 (STS).

The protein belongs to the adenylosuccinate synthetase family. In terms of assembly, homodimer. It depends on Mg(2+) as a cofactor.

It is found in the cytoplasm. It carries out the reaction IMP + L-aspartate + GTP = N(6)-(1,2-dicarboxyethyl)-AMP + GDP + phosphate + 2 H(+). Its pathway is purine metabolism; AMP biosynthesis via de novo pathway; AMP from IMP: step 1/2. Functionally, plays an important role in the de novo pathway of purine nucleotide biosynthesis. Catalyzes the first committed step in the biosynthesis of AMP from IMP. This is Adenylosuccinate synthetase from Bartonella henselae (strain ATCC 49882 / DSM 28221 / CCUG 30454 / Houston 1) (Rochalimaea henselae).